The chain runs to 265 residues: DNA repair protein RecO (265 aa).

Belongs to the RecO family.

Involved in DNA repair and RecF pathway recombination. This Mycobacterium ulcerans (strain Agy99) protein is DNA repair protein RecO.